A 378-amino-acid polypeptide reads, in one-letter code: MKILVDENMPYARDLFSRLGEVTAVPGRPIPVAQLADADALMVRSVTKVNESLLAGKPIKFVGTATAGTDHVDEAWLKQAGIGFSAAPGCNAIAVVEYVFSSLLMLAERDGFSLHERTVGIVGVGNVGRRLQARLEALGITTLLCDPPRADRGDEGDFRSLNELAQHADILTFHTPLFKDGPYKTLHLADEKLIRSLKPGAILINACRGAVVDNTALLTCLNEGQKLSVVLDVWEGEPELNVELLKKVDIGTPHIAGYTLEGKARGTTQVFEAYSKFIGHEQHVALDTLLPAPEFGRITLHGPLDQPTLKRLVHLVYDVRRDDAPLRKVAGIPGEFDKLRKNYLERREWSSLYVICDDASAASLLCKLGFNAVHHPAR.

Substrate contacts are provided by S45 and T66. NAD(+) contacts are provided by D146 and T175. The active site involves R208. An NAD(+)-binding site is contributed by D232. Residue E237 is part of the active site. The active-site Proton donor is H254. G257 lines the NAD(+) pocket. Y258 provides a ligand contact to substrate.

The protein belongs to the D-isomer specific 2-hydroxyacid dehydrogenase family. PdxB subfamily. In terms of assembly, homodimer.

It localises to the cytoplasm. The catalysed reaction is 4-phospho-D-erythronate + NAD(+) = (R)-3-hydroxy-2-oxo-4-phosphooxybutanoate + NADH + H(+). The protein operates within cofactor biosynthesis; pyridoxine 5'-phosphate biosynthesis; pyridoxine 5'-phosphate from D-erythrose 4-phosphate: step 2/5. In terms of biological role, catalyzes the oxidation of erythronate-4-phosphate to 3-hydroxy-2-oxo-4-phosphonooxybutanoate. The protein is Erythronate-4-phosphate dehydrogenase of Escherichia coli O81 (strain ED1a).